The sequence spans 283 residues: Shikimate dehydrogenase (NADP(+)) (283 aa).

Residues 16–18 (SLS) and threonine 63 contribute to the shikimate site. Lysine 67 acts as the Proton acceptor in catalysis. An NADP(+)-binding site is contributed by aspartate 79. Shikimate-binding residues include asparagine 88 and aspartate 103. Residues 128 to 132 (GAGGA) and glycine 243 each bind NADP(+).

Belongs to the shikimate dehydrogenase family. Homodimer.

The catalysed reaction is shikimate + NADP(+) = 3-dehydroshikimate + NADPH + H(+). The protein operates within metabolic intermediate biosynthesis; chorismate biosynthesis; chorismate from D-erythrose 4-phosphate and phosphoenolpyruvate: step 4/7. Involved in the biosynthesis of the chorismate, which leads to the biosynthesis of aromatic amino acids. Catalyzes the reversible NADPH linked reduction of 3-dehydroshikimate (DHSA) to yield shikimate (SA). The chain is Shikimate dehydrogenase (NADP(+)) from Xanthomonas euvesicatoria pv. vesicatoria (strain 85-10) (Xanthomonas campestris pv. vesicatoria).